The following is a 604-amino-acid chain: DNA polymerase alpha subunit B (604 aa).

The segment at 109 to 171 (ETLLNSYTTP…KYSSRSNRGE (63 aa)) is disordered. Residues 113-141 (NSYTTPSKGSQKRTITTPETPLTKRSVSA) show a composition bias toward polar residues. Phosphothreonine occurs at positions 129 and 132. Phosphoserine is present on residues Ser-143, Ser-149, Ser-154, and Ser-156. Residues 143-160 (SPHQLLSPSSFSPSATPP) show a composition bias toward low complexity.

The protein belongs to the DNA polymerase alpha subunit B family. Component of the alpha DNA polymerase complex (also known as the alpha DNA polymerase-primase complex) consisting of four subunits: the catalytic subunit POLA1, the regulatory subunit POLA2, and the primase complex subunits PRIM1 and PRIM2 respectively. Within the complex, POLA1 directly interacts with PRIM2. In terms of processing, phosphorylated in a cell cycle-dependent manner, in G2/M phase.

Its subcellular location is the nucleus. Functionally, accessory subunit of the DNA polymerase alpha complex (also known as the alpha DNA polymerase-primase complex) which plays an essential role in the initiation of DNA synthesis. During the S phase of the cell cycle, the DNA polymerase alpha complex (composed of a catalytic subunit POLA1, an accessory subunit POLA2 and two primase subunits, the catalytic subunit PRIM1 and the regulatory subunit PRIM2) is recruited to DNA at the replicative forks via direct interactions with MCM10 and WDHD1. The primase subunit of the polymerase alpha complex initiates DNA synthesis by oligomerising short RNA primers on both leading and lagging strands. These primers are initially extended by the polymerase alpha catalytic subunit and subsequently transferred to polymerase delta and polymerase epsilon for processive synthesis on the lagging and leading strand, respectively. This chain is DNA polymerase alpha subunit B (POLA2), found in Bos taurus (Bovine).